The chain runs to 166 residues: Replication gene B protein (166 aa).

Its function is as follows. Required for lagging strand synthesis. Might interact with the host dnaB protein. The polypeptide is Replication gene B protein (B) (Escherichia phage P2 (Bacteriophage P2)).